The sequence spans 576 residues: Sulfite reductase [NADPH] hemoprotein beta-component (576 aa).

Residues 1–12 (MDAKTQPDRSRD) show a composition bias toward basic and acidic residues. Positions 1–26 (MDAKTQPDRSRDVSQPLDKLGPDETL) are disordered. Positions 441, 447, 486, and 490 each coordinate [4Fe-4S] cluster. Cysteine 490 lines the siroheme pocket.

It belongs to the nitrite and sulfite reductase 4Fe-4S domain family. Alpha(8)-beta(8). The alpha component is a flavoprotein, the beta component is a hemoprotein. Siroheme serves as cofactor. The cofactor is [4Fe-4S] cluster.

The enzyme catalyses hydrogen sulfide + 3 NADP(+) + 3 H2O = sulfite + 3 NADPH + 4 H(+). The protein operates within sulfur metabolism; hydrogen sulfide biosynthesis; hydrogen sulfide from sulfite (NADPH route): step 1/1. Functionally, component of the sulfite reductase complex that catalyzes the 6-electron reduction of sulfite to sulfide. This is one of several activities required for the biosynthesis of L-cysteine from sulfate. The polypeptide is Sulfite reductase [NADPH] hemoprotein beta-component (Nitrobacter winogradskyi (strain ATCC 25391 / DSM 10237 / CIP 104748 / NCIMB 11846 / Nb-255)).